The chain runs to 230 residues: Secretory carrier-associated membrane protein 4 (230 aa).

Topologically, residues Met-1–Arg-39 are cytoplasmic. 4 helical membrane passes run Ile-40 to Ala-60, Trp-61 to Phe-81, Phe-105 to Gly-125, and Val-149 to Ile-169. The Cytoplasmic segment spans residues Met-170 to Pro-230. Position 194 is a phosphothreonine (Thr-194). The interval Phe-208–Pro-230 is disordered.

Belongs to the SCAMP family.

The protein resides in the membrane. Its function is as follows. Probably involved in membrane protein trafficking. The protein is Secretory carrier-associated membrane protein 4 (SCAMP4) of Bos taurus (Bovine).